We begin with the raw amino-acid sequence, 421 residues long: Gamma-glutamyl phosphate reductase (421 aa).

This sequence belongs to the gamma-glutamyl phosphate reductase family.

The protein localises to the cytoplasm. The enzyme catalyses L-glutamate 5-semialdehyde + phosphate + NADP(+) = L-glutamyl 5-phosphate + NADPH + H(+). It functions in the pathway amino-acid biosynthesis; L-proline biosynthesis; L-glutamate 5-semialdehyde from L-glutamate: step 2/2. In terms of biological role, catalyzes the NADPH-dependent reduction of L-glutamate 5-phosphate into L-glutamate 5-semialdehyde and phosphate. The product spontaneously undergoes cyclization to form 1-pyrroline-5-carboxylate. This is Gamma-glutamyl phosphate reductase from Dinoroseobacter shibae (strain DSM 16493 / NCIMB 14021 / DFL 12).